We begin with the raw amino-acid sequence, 1332 residues long: DNA-directed RNA polymerase subunit beta' (1332 aa).

The Zn(2+) site is built by cysteine 60, cysteine 62, cysteine 75, and cysteine 78. 3 residues coordinate Mg(2+): aspartate 535, aspartate 537, and aspartate 539. Residues cysteine 894, cysteine 977, cysteine 984, and cysteine 987 each contribute to the Zn(2+) site.

Belongs to the RNA polymerase beta' chain family. As to quaternary structure, the RNAP catalytic core consists of 2 alpha, 1 beta, 1 beta' and 1 omega subunit. When a sigma factor is associated with the core the holoenzyme is formed, which can initiate transcription. The cofactor is Mg(2+). Requires Zn(2+) as cofactor.

It carries out the reaction RNA(n) + a ribonucleoside 5'-triphosphate = RNA(n+1) + diphosphate. Functionally, DNA-dependent RNA polymerase catalyzes the transcription of DNA into RNA using the four ribonucleoside triphosphates as substrates. The chain is DNA-directed RNA polymerase subunit beta' from Corynebacterium kroppenstedtii (strain DSM 44385 / JCM 11950 / CIP 105744 / CCUG 35717).